The chain runs to 416 residues: MENITLDELGNFTLTNLRKLAKEHKIEGYSTIPKMELLNRLCYSIATAEGLIYSYGELDIINETYGFLRNTPQNIDVYVSNSQIKKFGLRQGDVIVGEVRKPLNDEKNFGLLKLIYVNGEKGELSRQRPIFDDLTPSYPIERLELGEGTVSSRIIDLIAPIGKGQRGLIVAPPKAGKTTILSDLANDILKYNKDVQVWIILIDERPEEVTDIKENVKNAEIFAATFDENTSVHLSVTEKVLEAAKREIEKGNNIVILMDSLTRLARSYNIEMPSSGKLLSGGIDPKSLYMPKKFLGAARKIRGGGSLTILATALIETGSRMDEVIFEEFKGTGNMELVLDRALQQLRLFPAVDILKSGTRKEELLYSKREFDSILKLRKFLLKLNEAEALKFLMDLIKRYSSNKDLLENIDYELKL.

Residues 51–121 (LIYSYGELDI…LKLIYVNGEK (71 aa)) form the Rho RNA-BD domain. ATP contacts are provided by residues 162-167 (GKGQRG), 174-179 (KAGKTT), and Arg205.

This sequence belongs to the Rho family. As to quaternary structure, homohexamer. The homohexamer assembles into an open ring structure.

In terms of biological role, facilitates transcription termination by a mechanism that involves Rho binding to the nascent RNA, activation of Rho's RNA-dependent ATPase activity, and release of the mRNA from the DNA template. The polypeptide is Transcription termination factor Rho (Streptobacillus moniliformis (strain ATCC 14647 / DSM 12112 / NCTC 10651 / 9901)).